A 349-amino-acid chain; its full sequence is Protein RecA (349 aa).

Position 65–72 (65–72) interacts with ATP; sequence GPESSGKT.

This sequence belongs to the RecA family.

It localises to the cytoplasm. Functionally, can catalyze the hydrolysis of ATP in the presence of single-stranded DNA, the ATP-dependent uptake of single-stranded DNA by duplex DNA, and the ATP-dependent hybridization of homologous single-stranded DNAs. It interacts with LexA causing its activation and leading to its autocatalytic cleavage. This is Protein RecA from Aliarcobacter butzleri (strain RM4018) (Arcobacter butzleri).